The sequence spans 429 residues: Enolase (429 aa).

Glutamine 162 serves as a coordination point for (2R)-2-phosphoglycerate. Catalysis depends on glutamate 204, which acts as the Proton donor. Positions 241, 286, and 313 each coordinate Mg(2+). (2R)-2-phosphoglycerate contacts are provided by lysine 338, arginine 367, serine 368, and lysine 389. Lysine 338 (proton acceptor) is an active-site residue.

It belongs to the enolase family. It depends on Mg(2+) as a cofactor.

The protein localises to the cytoplasm. It localises to the secreted. Its subcellular location is the cell surface. It catalyses the reaction (2R)-2-phosphoglycerate = phosphoenolpyruvate + H2O. Its pathway is carbohydrate degradation; glycolysis; pyruvate from D-glyceraldehyde 3-phosphate: step 4/5. In terms of biological role, catalyzes the reversible conversion of 2-phosphoglycerate (2-PG) into phosphoenolpyruvate (PEP). It is essential for the degradation of carbohydrates via glycolysis. This is Enolase from Halalkalibacterium halodurans (strain ATCC BAA-125 / DSM 18197 / FERM 7344 / JCM 9153 / C-125) (Bacillus halodurans).